The following is an 86-amino-acid chain: Putative membrane protein insertion efficiency factor (86 aa).

Residues 66–86 form a disordered region; the sequence is AGGHDPVPPVPPQRYPSAQEH.

It belongs to the UPF0161 family.

It localises to the cell inner membrane. Its function is as follows. Could be involved in insertion of integral membrane proteins into the membrane. This is Putative membrane protein insertion efficiency factor from Nitratidesulfovibrio vulgaris (strain ATCC 29579 / DSM 644 / CCUG 34227 / NCIMB 8303 / VKM B-1760 / Hildenborough) (Desulfovibrio vulgaris).